Here is a 462-residue protein sequence, read N- to C-terminus: Elongation factor 1-alpha (462 aa).

Position 2 is a blocked amino end (Gly) (Gly2). A tr-type G domain is found at 5 to 242 (KIHINIVVIG…DAILPPSRPT (238 aa)). The tract at residues 14-21 (GHVDSGKS) is G1. 14–21 (GHVDSGKS) is a GTP binding site. Residue Lys36 is modified to N6,N6,N6-trimethyllysine. Lys55 bears the N6-methyllysine mark. The segment at 70 to 74 (GITID) is G2. Residue Lys79 is modified to N6,N6,N6-trimethyllysine. Positions 91-94 (DAPG) are G3. Residues 91–95 (DAPGH) and 153–156 (NKMD) each bind GTP. The interval 153–156 (NKMD) is G4. Residues 194 to 196 (SGW) form a G5 region. N6,N6,N6-trimethyllysine is present on residues Lys219 and Lys318. Glu374 is modified (5-glutamyl glycerylphosphorylethanolamine).

This sequence belongs to the TRAFAC class translation factor GTPase superfamily. Classic translation factor GTPase family. EF-Tu/EF-1A subfamily. Post-translationally, the N-terminus is blocked.

Its subcellular location is the cytoplasm. This protein promotes the GTP-dependent binding of aminoacyl-tRNA to the A-site of ribosomes during protein biosynthesis. The chain is Elongation factor 1-alpha from Artemia salina (Brine shrimp).